A 798-amino-acid polypeptide reads, in one-letter code: Protocadherin beta-2 (798 aa).

A signal peptide spans 1–30; it reads MEAGEGKERVPKQRQVLIFFVLLGIAQASC. Over 31 to 692 the chain is Extracellular; that stretch reads QPRHYSVAEE…AQADLLTVYL (662 aa). 5 Cadherin domains span residues 37–135, 136–244, 249–349, 354–453, and 458–563; these read VAEE…SPVF, LDKE…VPEF, YEVQ…PPEL, LINQ…APAF, and YTLF…SPFV. N-linked (GlcNAc...) asparagine glycosylation occurs at Asn171. The residue at position 299 (Lys299) is an N6-acetyllysine. Residues Asn420 and Asn438 are each glycosylated (N-linked (GlcNAc...) asparagine). The N-linked (GlcNAc...) asparagine glycan is linked to Asn569. The 104-residue stretch at 570–673 folds into the Cadherin 6 domain; it reads GSAPCTELVP…LVDGFSQPYL (104 aa). Residues 693 to 713 traverse the membrane as a helical segment; the sequence is VVALASVSSLFLFSVLLFVAV. At 714–798 the chain is on the cytoplasmic side; the sequence is RLCRRSRAAS…PSFRKSFEFT (85 aa).

The protein resides in the cell membrane. Potential calcium-dependent cell-adhesion protein. May be involved in the establishment and maintenance of specific neuronal connections in the brain. The polypeptide is Protocadherin beta-2 (PCDHB2) (Homo sapiens (Human)).